Here is a 524-residue protein sequence, read N- to C-terminus: MTRLALLSTSDKTGLVELAQQLVNEYGFTLVSSGGTAVTIEKAGLPVTKVSDYTGSPEILGGRVKTLHPRIHGGILARRSLESDVQDLTENNIQGIDLVVVNLYPFEETIAKQKAQGITDPDQALADAVEQIDIGGPTMIRAAAKNHAHVTVLCDPQQYASYLQELKHGEGETSLPFRQACALKVFERMASYDRAIATHLRQSLATTDSQTQLSILGTAKQTLRYGENPHQNAVWYQESDTASGWAAAQQLQGKELSYNNLVDLEAARRVIAEFAQAETQPTVAILKHNNPCGVAQGETLLQAYEKALAADSVSAFGGIVAMNRAIDTDTAQVLTKTFLECIVAPECQPEAAAVLQAKSNLRVLVLPDLVSGPAVTVKAIAGGWLAQAADETLTPPADWQIVTQAKPTEAQLAELLFAWKVVKHVKSNAIVVTKDHTTLGVGAGQMNRVGSVNIALQQAGEKAQGGTLASDGFFPFDDSVRTAAAAGITAIIQPGGSIRDKDSIQAADELGIVMAFTGTRHFLH.

Residues 1–154 (MTRLALLSTS…KNHAHVTVLC (154 aa)) enclose the MGS-like domain.

This sequence belongs to the PurH family.

It carries out the reaction (6R)-10-formyltetrahydrofolate + 5-amino-1-(5-phospho-beta-D-ribosyl)imidazole-4-carboxamide = 5-formamido-1-(5-phospho-D-ribosyl)imidazole-4-carboxamide + (6S)-5,6,7,8-tetrahydrofolate. The enzyme catalyses IMP + H2O = 5-formamido-1-(5-phospho-D-ribosyl)imidazole-4-carboxamide. The protein operates within purine metabolism; IMP biosynthesis via de novo pathway; 5-formamido-1-(5-phospho-D-ribosyl)imidazole-4-carboxamide from 5-amino-1-(5-phospho-D-ribosyl)imidazole-4-carboxamide (10-formyl THF route): step 1/1. Its pathway is purine metabolism; IMP biosynthesis via de novo pathway; IMP from 5-formamido-1-(5-phospho-D-ribosyl)imidazole-4-carboxamide: step 1/1. The chain is Bifunctional purine biosynthesis protein PurH from Acaryochloris marina (strain MBIC 11017).